We begin with the raw amino-acid sequence, 678 residues long: Glycine--tRNA ligase beta subunit (678 aa).

This sequence belongs to the class-II aminoacyl-tRNA synthetase family. As to quaternary structure, tetramer of two alpha and two beta subunits.

The protein localises to the cytoplasm. The catalysed reaction is tRNA(Gly) + glycine + ATP = glycyl-tRNA(Gly) + AMP + diphosphate. The chain is Glycine--tRNA ligase beta subunit from Sulfurihydrogenibium sp. (strain YO3AOP1).